The following is a 1785-amino-acid chain: BCL-6 corepressor-like protein 1 (1785 aa).

Disordered regions lie at residues 65–101 (VGSG…KMDY), 113–137 (VPLS…NSRA), and 343–368 (ASTP…GPPS). The span at 83–97 (KLGHKSEDKPDDPQP) shows a compositional bias: basic and acidic residues. Position 496 is a phosphoserine (serine 496). Polar residues-rich tracts occupy residues 527–539 (PCTS…TTQP) and 586–600 (GTEQ…TFSP). Disordered regions lie at residues 527-550 (PCTS…PLAD) and 562-646 (PTPQ…PMPV). Phosphoserine is present on residues serine 599 and serine 613. A Glycyl lysine isopeptide (Lys-Gly) (interchain with G-Cter in SUMO2) cross-link involves residue lysine 747. Disordered stretches follow at residues 753–781 (IIDQ…QPST), 876–901 (SSSE…EQDP), and 937–977 (VQPS…LKLA). Phosphoserine is present on residues serine 1029 and serine 1033. Lysine 1092 is covalently cross-linked (Glycyl lysine isopeptide (Lys-Gly) (interchain with G-Cter in SUMO2)). 2 disordered regions span residues 1107-1293 (PDDV…QGRR) and 1312-1487 (WDTN…PEAR). Phosphoserine is present on serine 1162. A compositionally biased stretch (basic residues) spans 1176-1185 (VRGKHKHRKP). Over residues 1195 to 1213 (KRADSHEEGSLEKKAKSSF) the composition is skewed to basic and acidic residues. The span at 1222–1234 (STRTRSQSGSICS) shows a compositional bias: polar residues. Residues 1271-1284 (TQRDTQYRSHHAQD) are compositionally biased toward basic and acidic residues. Acidic residues predominate over residues 1314-1324 (TNEEEEEEEEE). A Nuclear localization signal motif is present at residues 1328–1336 (KRKKRRRQK). Positions 1328-1339 (KRKKRRRQKSRK) are enriched in basic residues. The span at 1352–1363 (EQRRKGRADLKA) shows a compositional bias: basic and acidic residues. A compositionally biased stretch (polar residues) spans 1440-1449 (WSQQKTRSPK). Over residues 1461 to 1480 (TPSKSRSASSEEASESPTAR) the composition is skewed to low complexity. Serine 1476 is subject to Phosphoserine. ANK repeat units follow at residues 1529–1558 (AGYT…NVNC), 1562–1591 (DGTR…DPTL), and 1595–1623 (SGQT…QGRA). A PCGF Ub-like fold domain (PUFD); required for the interaction with the KDM2B-SKP1 heterodimeric complex region spans residues 1668–1785 (DDFMFELSDK…SEVEFQSCNS (118 aa)).

It belongs to the BCOR family. As to quaternary structure, interacts with PCGF1, forming heterodimers. The PCGF1-BCORL1 heterodimeric complex interacts with the KDM2B-SKP1 heterodimeric complex to form a homotetrameric polycomb repression complex 1 (PRC1.1). Interacts with SKP1. Interacts with CTBP1, HDAC4, HDAC5 and HDAC7. As to expression, detected in testis and prostate. Detected at lower levels in peripheral blood leukocytes and spleen. Mainly expressed in the spermatogonia and primary spermatocytes.

Its subcellular location is the nucleus. In terms of biological role, transcriptional corepressor. May specifically inhibit gene expression when recruited to promoter regions by sequence-specific DNA-binding proteins such as BCL6. This repression may be mediated at least in part by histone deacetylase activities which can associate with this corepressor. The polypeptide is BCL-6 corepressor-like protein 1 (Homo sapiens (Human)).